Reading from the N-terminus, the 476-residue chain is Ubiquitin-conjugating enzyme E2 variant 3 (476 aa).

Residues 2–145 form the UEV domain; it reads EFSAETLRQQ…EEELPLYSLS (144 aa). 185-213 contacts NAD(+); it reads GDMALACLLAVSAKGTAGKLLLLDPTDGE.

The protein in the N-terminal section; belongs to the ubiquitin-conjugating enzyme family. UEV subfamily. It in the C-terminal section; belongs to the LDH/MDH superfamily. In terms of assembly, homodimer.

Its function is as follows. Possible negative regulator of polyubiquitination. This chain is Ubiquitin-conjugating enzyme E2 variant 3 (uevld), found in Xenopus tropicalis (Western clawed frog).